The sequence spans 84 residues: Large ribosomal subunit protein uL23 (84 aa).

The protein belongs to the universal ribosomal protein uL23 family. In terms of assembly, part of the 50S ribosomal subunit. Contacts protein L29.

Binds to 23S rRNA. One of the proteins that surrounds the polypeptide exit tunnel on the outside of the ribosome. This is Large ribosomal subunit protein uL23 from Thermoplasma acidophilum (strain ATCC 25905 / DSM 1728 / JCM 9062 / NBRC 15155 / AMRC-C165).